We begin with the raw amino-acid sequence, 411 residues long: Lissencephaly-1 homolog (411 aa).

The 33-residue stretch at 9-41 (QREELNQAIADYLGSNGYADSLEAFRKEADLST) folds into the LisH domain. Residues 56-83 (TSVIRLQKKVMELEAKLTEAEKEVIEGA) adopt a coiled-coil conformation. WD repeat units follow at residues 106–147 (GHRA…RSLK), 148–187 (GHTD…ECVK), 191–230 (GHDH…CVKT), 233–272 (GHRE…CKVE), 275–334 (DHEH…CLFT), 337–376 (GHDN…CMKT), and 379–411 (AHQH…WECR).

This sequence belongs to the WD repeat LIS1/nudF family.

It localises to the cytoplasm. It is found in the cytoskeleton. Its subcellular location is the microtubule organizing center. The protein resides in the centrosome. Functionally, positively regulates the activity of the minus-end directed microtubule motor protein dynein. May enhance dynein-mediated microtubule sliding by targeting dynein to the microtubule plus end. Required for several dynein- and microtubule-dependent processes. The chain is Lissencephaly-1 homolog from Drosophila ananassae (Fruit fly).